We begin with the raw amino-acid sequence, 850 residues long: Ras GTPase-activating protein 2 (850 aa).

Positions 1–24 are enriched in low complexity; it reads MAAAAPAAAAASSEAPAASATAEP. The interval 1 to 32 is disordered; it reads MAAAAPAAAAASSEAPAASATAEPEAGDQDSR. Ala2 is modified (N-acetylalanine). C2 domains follow at residues 20–138 and 149–289; these read ATAE…ETWF and VQGK…QAWY. Residues 372–589 enclose the Ras-GAP domain; it reads DKLVPFATAV…IAVKKFLDEI (218 aa). Phosphoserine is present on Ser555. In terms of domain architecture, PH spans 604–706; sequence VHLKEGEMYK…WIDVLCRVSR (103 aa). The Btk-type zinc-finger motif lies at 708–744; sequence NQNRLSFYHPSVYLNGNWLCCQETGENTLGCKPCTAG. Residues His716, Cys727, Cys728, and Cys738 each contribute to the Zn(2+) site. The interval 825-850 is disordered; that stretch reads HEKYRKKRSSSAKYGSKENPIVGKAS.

It localises to the cytoplasm. The protein localises to the perinuclear region. Its function is as follows. Inhibitory regulator of the Ras-cyclic AMP pathway. Binds inositol tetrakisphosphate (IP4). The protein is Ras GTPase-activating protein 2 (RASA2) of Homo sapiens (Human).